We begin with the raw amino-acid sequence, 349 residues long: N-acetyltaurine hydrolase (349 aa).

Histidine 26, histidine 28, glutamate 169, histidine 201, histidine 230, and aspartate 298 together coordinate a divalent metal cation.

The protein belongs to the metallo-dependent hydrolases superfamily. Phosphotriesterase family. A divalent metal cation is required as a cofactor.

It localises to the cytoplasm. The protein localises to the cytosol. The enzyme catalyses N-acetyltaurine + H2O = taurine + acetate. It catalyses the reaction N-propanoyltaurine + H2O = propanoate + taurine. It carries out the reaction N-acetyl-L-methionine + H2O = L-methionine + acetate. The catalysed reaction is N-acetyl-L-isoleucine + H2O = L-isoleucine + acetate. The enzyme catalyses N-acetyl-L-leucine + H2O = L-leucine + acetate. It catalyses the reaction N-acetyl-L-valine + H2O = L-valine + acetate. N-acetyltaurine hydrolase that catalyzes the hydrolysis of N-acetyltaurine into taurine and acetate. PTER also acts on other N-acetyl amino acids (Met, Ile, Leu, Val) and N-propionyltaurine, but at lower rates. The polypeptide is N-acetyltaurine hydrolase (pter) (Danio rerio (Zebrafish)).